The primary structure comprises 587 residues: Lamin-B1 (587 aa).

Positions 1-11 are enriched in polar residues; sequence MATATPVQQRA. The interval 1–29 is disordered; it reads MATATPVQQRAGSRASAPATPFSPTRLSR. Residue Ala2 is modified to N-acetylalanine. Positions 2 to 34 are head; that stretch reads ATATPVQQRAGSRASAPATPFSPTRLSRLQEKE. Thr3 and Thr5 each carry phosphothreonine. Arg14 carries the post-translational modification Omega-N-methylarginine. The residue at position 16 (Ser16) is a Phosphoserine. At Thr20 the chain carries Phosphothreonine. The residue at position 23 (Ser23) is a Phosphoserine. Thr25 is subject to Phosphothreonine. A Phosphoserine modification is found at Ser28. In terms of domain architecture, IF rod spans 32–388; it reads EKEELRELND…KLLEGEEERL (357 aa). The interval 35–69 is coil 1A; it reads ELRELNDRLAVYIDKVRSLETENSALQLQVTEREE. The interval 70-81 is linker 1; that stretch reads VRGRELTGLKAL. The interval 82 to 215 is coil 1B; sequence YETELADARR…EFRKNMYEEE (134 aa). Lys102 participates in a covalent cross-link: Glycyl lysine isopeptide (Lys-Gly) (interchain with G-Cter in SUMO2). Lys111 is subject to N6-acetyllysine. Residue Lys123 forms a Glycyl lysine isopeptide (Lys-Gly) (interchain with G-Cter in SUMO2) linkage. Position 126 is a phosphoserine (Ser126). Lys145 participates in a covalent cross-link: Glycyl lysine isopeptide (Lys-Gly) (interchain with G-Cter in SUMO2). Residue Lys157 is modified to N6-acetyllysine; alternate. Lys157 is covalently cross-linked (Glycyl lysine isopeptide (Lys-Gly) (interchain with G-Cter in SUMO2); alternate). Ser158 is modified (phosphoserine). Lys181 is covalently cross-linked (Glycyl lysine isopeptide (Lys-Gly) (interchain with G-Cter in SUMO2)). Ser200 and Ser232 each carry phosphoserine. Residues 216-243 form a linker 2 region; that stretch reads INETRRKHETRLVEVDSGRQIEYEYKLA. Glycyl lysine isopeptide (Lys-Gly) (interchain with G-Cter in SUMO2) cross-links involve residues Lys241 and Lys261. A coil 2 region spans residues 244–386; sequence QALHEMREQH…YRKLLEGEEE (143 aa). Lys271 is modified (N6-acetyllysine; alternate). A Glycyl lysine isopeptide (Lys-Gly) (interchain with G-Cter in SUMO2); alternate cross-link involves residue Lys271. Ser278 and Ser302 each carry phosphoserine. Residue Lys312 forms a Glycyl lysine isopeptide (Lys-Gly) (interchain with G-Cter in SUMO2) linkage. An N6-acetyllysine; alternate modification is found at Lys330. Lys330 participates in a covalent cross-link: Glycyl lysine isopeptide (Lys-Gly) (interchain with G-Cter in SUMO2); alternate. 2 positions are modified to phosphoserine: Ser375 and Ser393. The tail stretch occupies residues 387–587; sequence RLKLSPSPSS…RASNKSCAIM (201 aa). Over residues 390 to 409 the composition is skewed to low complexity; it reads LSPSPSSRVTVSRASSSRSV. Residues 390–432 form a disordered region; the sequence is LSPSPSSRVTVSRASSSRSVRTTRGKRKRVDVEESEASSSVSI. An O-linked (GlcNAc) threonine glycan is attached at Thr399. At Arg413 the chain carries Omega-N-methylarginine. Positions 415–420 match the Nuclear localization signal motif; it reads KRKRVD. Positions 430 to 546 constitute an LTD domain; it reads VSISHSASAT…EEVAQRSTVF (117 aa). At Lys483 the chain carries N6-acetyllysine. A Glycyl lysine isopeptide (Lys-Gly) (interchain with G-Cter in SUMO2) cross-link involves residue Lys532. Phosphoserine is present on Ser534. Lys547 participates in a covalent cross-link: Glycyl lysine isopeptide (Lys-Gly) (interchain with G-Cter in SUMO2). Residues 550–587 are disordered; the sequence is IPEEEEEEEEEPIGVPLEEERFHQQGTPRASNKSCAIM. Over residues 551–561 the composition is skewed to acidic residues; it reads PEEEEEEEEEP. Polar residues predominate over residues 573–587; that stretch reads QQGTPRASNKSCAIM. Phosphothreonine is present on Thr576. Cys584 carries the cysteine methyl ester modification. Cys584 carries the S-farnesyl cysteine lipid modification. The propeptide at 585 to 587 is removed in mature form; that stretch reads AIM.

The protein belongs to the intermediate filament family. In terms of assembly, homodimer. Lamin dimers then assemble into dimeric head-to-tail polymers. Ultimately, two head-to-tail polymers assemble laterally into a protofilament with a uniformly shaped rod of 3.5 nm in diameter. Interacts with SPAG4 and SEPT12. B-type lamins undergo a series of modifications, such as farnesylation and phosphorylation. Increased phosphorylation of the lamins occurs before envelope disintegration and probably plays a role in regulating lamin associations. In terms of processing, phosphorylation plays a key role in lamin organization, subcellular localization and nuclear envelope disintegration. Phosphorylation by CDK1 at Ser-23 and Ser-393 at the onset of mitosis drives lamin disassembly and nuclear envelope breakdown.

It is found in the nucleus lamina. In terms of biological role, lamins are intermediate filament proteins that assemble into a filamentous meshwork, and which constitute the major components of the nuclear lamina, a fibrous layer on the nucleoplasmic side of the inner nuclear membrane. Lamins provide a framework for the nuclear envelope, bridging the nuclear envelope and chromatin, thereby playing an important role in nuclear assembly, chromatin organization, nuclear membrane and telomere dynamics. The structural integrity of the lamina is strictly controlled by the cell cycle, as seen by the disintegration and formation of the nuclear envelope in prophase and telophase, respectively. This chain is Lamin-B1 (Lmnb1), found in Rattus norvegicus (Rat).